The primary structure comprises 76 residues: uncharacterized protein (76 aa).

One can recognise an HTH cro/C1-type domain in the interval 15-69; the sequence is VRIVRKEQNLRQDELAGVAGVGLRFIVDLEAGKPTAQIGKVLQVLQTLGCSIDIL. The segment at residues 26 to 45 is a DNA-binding region (H-T-H motif); sequence QDELAGVAGVGLRFIVDLEA.

This is an uncharacterized protein from Sinorhizobium fredii (strain NBRC 101917 / NGR234).